We begin with the raw amino-acid sequence, 271 residues long: Proteasome inhibitor PI31 subunit (271 aa).

Alanine 2 carries the N-acetylalanine modification. The segment at 2 to 150 (AGLEVLFASA…PIHEQWEKAR (149 aa)) is important for homodimerization and interaction with FBXO7. Phosphoserine is present on residues serine 153 and serine 189. At arginine 205 the chain carries Omega-N-methylarginine. Asymmetric dimethylarginine is present on arginine 219. Residues 226 to 271 (SGLPNRLPPGAVPPGARFDPFGPIGTSPSGPNPDHLPPPGYDDMYL) form a disordered region. Arginine 231 is subject to Omega-N-methylarginine. Serine 252 bears the Phosphoserine mark. Residues 255–265 (GPNPDHLPPPG) are compositionally biased toward pro residues.

The protein belongs to the proteasome inhibitor PI31 family. Monomer and homodimer. Interacts with FBXO7.

The protein localises to the cytoplasm. The protein resides in the endoplasmic reticulum. Functionally, plays an important role in control of proteasome function. Inhibits the hydrolysis of protein and peptide substrates by the 20S proteasome. Also inhibits the activation of the proteasome by the proteasome regulatory proteins PA700 and PA28. This is Proteasome inhibitor PI31 subunit (Psmf1) from Mus musculus (Mouse).